A 78-amino-acid chain; its full sequence is Acyl carrier protein (78 aa).

Positions 4–78 (AQIKEKVYDI…QQAIDYIVKK (75 aa)) constitute a Carrier domain. The residue at position 39 (serine 39) is an O-(pantetheine 4'-phosphoryl)serine.

The protein belongs to the acyl carrier protein (ACP) family. 4'-phosphopantetheine is transferred from CoA to a specific serine of apo-ACP by AcpS. This modification is essential for activity because fatty acids are bound in thioester linkage to the sulfhydryl of the prosthetic group.

The protein localises to the cytoplasm. It functions in the pathway lipid metabolism; fatty acid biosynthesis. Its function is as follows. Carrier of the growing fatty acid chain in fatty acid biosynthesis. In Chlorobium phaeobacteroides (strain DSM 266 / SMG 266 / 2430), this protein is Acyl carrier protein.